Consider the following 407-residue polypeptide: Phosphopentomutase (407 aa).

D10, D306, H311, D347, H348, and H359 together coordinate Mn(2+).

The protein belongs to the phosphopentomutase family. It depends on Mn(2+) as a cofactor.

It is found in the cytoplasm. The enzyme catalyses 2-deoxy-alpha-D-ribose 1-phosphate = 2-deoxy-D-ribose 5-phosphate. The catalysed reaction is alpha-D-ribose 1-phosphate = D-ribose 5-phosphate. It participates in carbohydrate degradation; 2-deoxy-D-ribose 1-phosphate degradation; D-glyceraldehyde 3-phosphate and acetaldehyde from 2-deoxy-alpha-D-ribose 1-phosphate: step 1/2. Its function is as follows. Isomerase that catalyzes the conversion of deoxy-ribose 1-phosphate (dRib-1-P) and ribose 1-phosphate (Rib-1-P) to deoxy-ribose 5-phosphate (dRib-5-P) and ribose 5-phosphate (Rib-5-P), respectively. The protein is Phosphopentomutase of Edwardsiella ictaluri (strain 93-146).